Here is a 354-residue protein sequence, read N- to C-terminus: Release factor glutamine methyltransferase (354 aa).

S-adenosyl-L-methionine-binding positions include 174–178 (GSGSG), Asp197, and Asn241. Position 241-244 (241-244 (NPPY)) interacts with substrate.

Belongs to the protein N5-glutamine methyltransferase family. PrmC subfamily.

It carries out the reaction L-glutaminyl-[peptide chain release factor] + S-adenosyl-L-methionine = N(5)-methyl-L-glutaminyl-[peptide chain release factor] + S-adenosyl-L-homocysteine + H(+). Its function is as follows. Methylates the class 1 translation termination release factors RF1/PrfA and RF2/PrfB on the glutamine residue of the universally conserved GGQ motif. The polypeptide is Release factor glutamine methyltransferase (Fusobacterium nucleatum subsp. nucleatum (strain ATCC 25586 / DSM 15643 / BCRC 10681 / CIP 101130 / JCM 8532 / KCTC 2640 / LMG 13131 / VPI 4355)).